A 33-amino-acid chain; its full sequence is U-limacoditoxin(13)-As11 (33 aa).

An N-terminal signal peptide occupies residues 1 to 19 (MFKLLLVLALTMLAQSALA). Phenylalanine amide is present on F32.

It belongs to the FARP (FMRFamide related peptide) family. Expressed by the venom secretory cell of the spine. The spine is a cuticular structure containing a single large nucleated venom-secreting cell at its base. It is an independent unit capable of producing, storing and injecting venom. On the back of A.stimulea caterpillars, spines are grouped together by 50 to 100 to form scoli, of which there are eight.

It is found in the secreted. Is toxic when injected into Drosophila melanogaster. Also shows a low anthelmintic activity against the parasitic nematode H.contortus (drug susceptible Kirby isolate). The sequence is that of U-limacoditoxin(13)-As11 from Acharia stimulea (Saddleback caterpillar moth).